The primary structure comprises 250 residues: 3-deoxy-manno-octulosonate cytidylyltransferase (250 aa).

Belongs to the KdsB family.

The protein localises to the cytoplasm. It carries out the reaction 3-deoxy-alpha-D-manno-oct-2-ulosonate + CTP = CMP-3-deoxy-beta-D-manno-octulosonate + diphosphate. It participates in nucleotide-sugar biosynthesis; CMP-3-deoxy-D-manno-octulosonate biosynthesis; CMP-3-deoxy-D-manno-octulosonate from 3-deoxy-D-manno-octulosonate and CTP: step 1/1. Its pathway is bacterial outer membrane biogenesis; lipopolysaccharide biosynthesis. Activates KDO (a required 8-carbon sugar) for incorporation into bacterial lipopolysaccharide in Gram-negative bacteria. This is 3-deoxy-manno-octulosonate cytidylyltransferase from Legionella pneumophila subsp. pneumophila (strain Philadelphia 1 / ATCC 33152 / DSM 7513).